The sequence spans 293 residues: Putative serine protease 42 (293 aa).

Positions 1 to 26 (MSSGGGSRGLLAWLLLLQPWPGQNWA) are cleaved as a signal peptide. The disordered stretch occupies residues 33 to 60 (LPSPLLSEEGGENPEASPAPGPEAGPPL). Residues 80–293 (IVGGVDAEEG…IVSWGIGCGR (214 aa)) form the Peptidase S1 domain. The cysteines at positions 105 and 121 are disulfide-linked. Histidine 120 acts as the Charge relay system in catalysis. N-linked (GlcNAc...) asparagine glycosylation occurs at asparagine 141. Residue aspartate 166 is the Charge relay system of the active site. N-linked (GlcNAc...) asparagine glycosylation is present at asparagine 177. 3 disulfides stabilise this stretch: cysteine 200–cysteine 273, cysteine 232–cysteine 253, and cysteine 263–cysteine 291. Serine 267 serves as the catalytic Charge relay system. N-linked (GlcNAc...) asparagine glycosylation occurs at asparagine 276.

Belongs to the peptidase S1 family.

It localises to the cytoplasm. The protein localises to the cell membrane. In terms of biological role, plays a role in spermatogenesis. Involved in germ cell survival during meiosis. This chain is Putative serine protease 42, found in Homo sapiens (Human).